Consider the following 334-residue polypeptide: tRNA-cytidine(32) 2-sulfurtransferase (334 aa).

A PP-loop motif motif is present at residues 74–79 (SGGKDS). [4Fe-4S] cluster-binding residues include cysteine 149, cysteine 152, and cysteine 240.

It belongs to the TtcA family. Homodimer. It depends on Mg(2+) as a cofactor. [4Fe-4S] cluster is required as a cofactor.

It localises to the cytoplasm. The enzyme catalyses cytidine(32) in tRNA + S-sulfanyl-L-cysteinyl-[cysteine desulfurase] + AH2 + ATP = 2-thiocytidine(32) in tRNA + L-cysteinyl-[cysteine desulfurase] + A + AMP + diphosphate + H(+). The protein operates within tRNA modification. In terms of biological role, catalyzes the ATP-dependent 2-thiolation of cytidine in position 32 of tRNA, to form 2-thiocytidine (s(2)C32). The sulfur atoms are provided by the cysteine/cysteine desulfurase (IscS) system. The polypeptide is tRNA-cytidine(32) 2-sulfurtransferase (Burkholderia ambifaria (strain ATCC BAA-244 / DSM 16087 / CCUG 44356 / LMG 19182 / AMMD) (Burkholderia cepacia (strain AMMD))).